A 366-amino-acid polypeptide reads, in one-letter code: D-alanine--D-alanine ligase (366 aa).

The ATP-grasp domain occupies 150-353 (KRVLRDAGVP…YPALVDRLIV (204 aa)). Residue 180-235 (IGQLGLPLFIKPASQGSSVGVSKVTDRAGFAAALALAFRYDAKVLVEQGISGREIE) coordinates ATP. Asp307, Glu320, and Asn322 together coordinate Mg(2+).

It belongs to the D-alanine--D-alanine ligase family. Mg(2+) is required as a cofactor. It depends on Mn(2+) as a cofactor.

The protein localises to the cytoplasm. It carries out the reaction 2 D-alanine + ATP = D-alanyl-D-alanine + ADP + phosphate + H(+). It participates in cell wall biogenesis; peptidoglycan biosynthesis. Its function is as follows. Cell wall formation. The chain is D-alanine--D-alanine ligase from Sodalis glossinidius (strain morsitans).